We begin with the raw amino-acid sequence, 121 residues long: Large ribosomal subunit protein uL18 (121 aa).

This sequence belongs to the universal ribosomal protein uL18 family. In terms of assembly, part of the 50S ribosomal subunit; part of the 5S rRNA/L5/L18/L25 subcomplex. Contacts the 5S and 23S rRNAs.

Functionally, this is one of the proteins that bind and probably mediate the attachment of the 5S RNA into the large ribosomal subunit, where it forms part of the central protuberance. The chain is Large ribosomal subunit protein uL18 from Polaromonas naphthalenivorans (strain CJ2).